The following is a 264-amino-acid chain: MKIALGIEYDGSRYYGWQRQQEVKSVQGCLEEALSKVADEPISVFCAGRTDAGVHATGQVVHFETSVQRKDAAWTMGVNVHLPPDIAVRWVKTVDEGFHARFSATARRYRYIIFNHRYRPAVLANGVTHFHYPLDEKRMHQAAQCILGENDFTSFRAVQCQSKTPWRNVMHINVNRYGHYVVIDIKANAFVHHMVRNIAGSLMEIGCGNQDINWMAQLLALKDRAKAAATAKAAGLYLVAVDYPVQFDLPCAVMGPLFLADDLI.

Aspartate 51 acts as the Nucleophile in catalysis. Tyrosine 109 provides a ligand contact to substrate.

Belongs to the tRNA pseudouridine synthase TruA family. As to quaternary structure, homodimer.

It catalyses the reaction uridine(38/39/40) in tRNA = pseudouridine(38/39/40) in tRNA. Functionally, formation of pseudouridine at positions 38, 39 and 40 in the anticodon stem and loop of transfer RNAs. In Photorhabdus laumondii subsp. laumondii (strain DSM 15139 / CIP 105565 / TT01) (Photorhabdus luminescens subsp. laumondii), this protein is tRNA pseudouridine synthase A.